We begin with the raw amino-acid sequence, 157 residues long: Transcription elongation factor GreA (157 aa).

Over residues 25–43 the composition is skewed to basic and acidic residues; the sequence is EGRAKVAEQLSEARDKGDL. Positions 25–47 are disordered; it reads EGRAKVAEQLSEARDKGDLSENA. Positions 43–79 form a coiled coil; the sequence is LSENAEYDAAKEAQEILERRIAKLEELMINARVINKD.

Belongs to the GreA/GreB family.

Functionally, necessary for efficient RNA polymerase transcription elongation past template-encoded arresting sites. The arresting sites in DNA have the property of trapping a certain fraction of elongating RNA polymerases that pass through, resulting in locked ternary complexes. Cleavage of the nascent transcript by cleavage factors such as GreA or GreB allows the resumption of elongation from the new 3'terminus. GreA releases sequences of 2 to 3 nucleotides. The polypeptide is Transcription elongation factor GreA (Amoebophilus asiaticus (strain 5a2)).